The sequence spans 71 residues: Protein Tlp homolog (71 aa).

Residues 30–56 (ETLQNNSLSRDQRQAIMEKNKRREESI) form a disordered region. Over residues 39-56 (RDQRQAIMEKNKRREESI) the composition is skewed to basic and acidic residues.

Belongs to the Tlp family.

This is Protein Tlp homolog from Desulforamulus reducens (strain ATCC BAA-1160 / DSM 100696 / MI-1) (Desulfotomaculum reducens).